A 174-amino-acid polypeptide reads, in one-letter code: Glutamyl-tRNA(Gln) amidotransferase subunit F, mitochondrial (174 aa).

It belongs to the GatF family. In terms of assembly, subunit of the heterotrimeric GatFAB amidotransferase (AdT) complex, composed of A, B and F subunits.

Its subcellular location is the mitochondrion inner membrane. It carries out the reaction L-glutamyl-tRNA(Gln) + L-glutamine + ATP + H2O = L-glutaminyl-tRNA(Gln) + L-glutamate + ADP + phosphate + H(+). Allows the formation of correctly charged Gln-tRNA(Gln) through the transamidation of misacylated Glu-tRNA(Gln) in the mitochondria. The reaction takes place in the presence of glutamine and ATP through an activated gamma-phospho-Glu-tRNA(Gln). Required for proper protein synthesis within the mitochondrion. The polypeptide is Glutamyl-tRNA(Gln) amidotransferase subunit F, mitochondrial (Kluyveromyces lactis (strain ATCC 8585 / CBS 2359 / DSM 70799 / NBRC 1267 / NRRL Y-1140 / WM37) (Yeast)).